The sequence spans 705 residues: Ribosomal RNA large subunit methyltransferase K/L (705 aa).

Positions 43-154 (LLYQSLLWSR…RDTASVALDL (112 aa)) constitute a THUMP domain.

Belongs to the methyltransferase superfamily. RlmKL family.

It is found in the cytoplasm. It carries out the reaction guanosine(2445) in 23S rRNA + S-adenosyl-L-methionine = N(2)-methylguanosine(2445) in 23S rRNA + S-adenosyl-L-homocysteine + H(+). It catalyses the reaction guanosine(2069) in 23S rRNA + S-adenosyl-L-methionine = N(2)-methylguanosine(2069) in 23S rRNA + S-adenosyl-L-homocysteine + H(+). Specifically methylates the guanine in position 2445 (m2G2445) and the guanine in position 2069 (m7G2069) of 23S rRNA. The protein is Ribosomal RNA large subunit methyltransferase K/L of Pectobacterium atrosepticum (strain SCRI 1043 / ATCC BAA-672) (Erwinia carotovora subsp. atroseptica).